We begin with the raw amino-acid sequence, 201 residues long: Achaete-scute complex protein T5 (201 aa).

The span at 1–10 shows a compositional bias: polar residues; the sequence is MALGSENHSV. Residues 1-32 form a disordered region; the sequence is MALGSENHSVFNDDEESSSAFNGPSVIRRNAR. The bHLH domain occupies 24 to 90; sequence PSVIRRNARE…KMAVEYIRRL (67 aa).

Efficient DNA binding requires dimerization with another bHLH protein. In terms of tissue distribution, l(1)SC, SC and AC strongly label the presumptive stomatogastric nervous system, while ASE is more prominent in the presumptive procephalic lobe.

Functionally, AS-C proteins are involved in the determination of the neuronal precursors in the peripheral nervous system and the central nervous system. The polypeptide is Achaete-scute complex protein T5 (ac) (Drosophila melanogaster (Fruit fly)).